The primary structure comprises 162 residues: Transcription elongation factor GreA (162 aa).

Residues 45 to 74 (ENAEYEAAREKQAFIEGRIKELEDMTARAE) are a coiled coil.

It belongs to the GreA/GreB family.

Functionally, necessary for efficient RNA polymerase transcription elongation past template-encoded arresting sites. The arresting sites in DNA have the property of trapping a certain fraction of elongating RNA polymerases that pass through, resulting in locked ternary complexes. Cleavage of the nascent transcript by cleavage factors such as GreA or GreB allows the resumption of elongation from the new 3'terminus. GreA releases sequences of 2 to 3 nucleotides. This Rickettsia typhi (strain ATCC VR-144 / Wilmington) protein is Transcription elongation factor GreA.